The sequence spans 338 residues: Adenylosuccinate synthetase (338 aa).

Residues 12-18 and 42-44 contribute to the GTP site; these read GDEGKGK and GHT. Asp-13 serves as the catalytic Proton acceptor. Residues Asp-13 and Gly-42 each coordinate Mg(2+). Residues 13-16, 40-43, Thr-127, Arg-141, Gln-179, Thr-194, and Arg-256 contribute to the IMP site; these read DEGK and NAGH. His-43 serves as the catalytic Proton donor. 252–258 contributes to the substrate binding site; the sequence is TVTGRRR. Residues Arg-258, 284–286, and 324–326 each bind GTP; these read CLD and STG.

Belongs to the adenylosuccinate synthetase family. In terms of assembly, homodimer. Mg(2+) serves as cofactor.

It is found in the cytoplasm. The enzyme catalyses IMP + L-aspartate + GTP = N(6)-(1,2-dicarboxyethyl)-AMP + GDP + phosphate + 2 H(+). It functions in the pathway purine metabolism; AMP biosynthesis via de novo pathway; AMP from IMP: step 1/2. Plays an important role in the de novo pathway of purine nucleotide biosynthesis. Catalyzes the first committed step in the biosynthesis of AMP from IMP. This Methanococcus maripaludis (strain C7 / ATCC BAA-1331) protein is Adenylosuccinate synthetase.